Here is a 436-residue protein sequence, read N- to C-terminus: Transcriptional regulator STP3 (436 aa).

Residues 204-277 (EPLDDEFVPP…TKRKYTKKKQ (74 aa)) are disordered. Residues 230 to 265 (ISPPASSDSSSSSSYVPQLIPSSSSSVTSNGDSPVS) are compositionally biased toward low complexity. The segment covering 268 to 277 (TKRKYTKKKQ) has biased composition (basic residues). The C2H2-type zinc finger occupies 315 to 337 (FDCPSCDASFKVKGYLTRHLKKH).

Post-translationally, activated by the amino acid-induced proteolytic removal of an N-terminal inhibitory domain.

The protein resides in the cell membrane. It is found in the nucleus. Functionally, transcription factor that activates genes required for degradation of extracellular protein and uptake of peptides such as the secreted aspartyl protease SAP2 or the oligopeptide transporter OPT1. Required for virulence. Synthesized as latent cytoplasmic precursor, which, upon a signal initiated by the plasma membrane SPS amino acid sensor system (including CSY1 and CSH3), becomes proteolytically activated and relocates to the nucleus, where it induces the expression of SPS-sensor-regulated genes. The chain is Transcriptional regulator STP3 (STP3) from Candida albicans (strain SC5314 / ATCC MYA-2876) (Yeast).